The following is a 754-amino-acid chain: Polyadenylate-binding protein, cytoplasmic and nuclear (754 aa).

Positions 1–25 are enriched in polar residues; the sequence is MSAEVSTTPAADNVNGTPEATNAAA. The tract at residues 1-52 is disordered; that stretch reads MSAEVSTTPAADNVNGTPEATNAAATSAPEVTAVESSSPTSPNNNNQPHSAS. Over residues 36–46 the composition is skewed to low complexity; that stretch reads SSSPTSPNNNN. 4 RRM domains span residues 51–129, 139–216, 232–309, and 335–465; these read ASLY…WSQR, GNVF…HHIS, TNIY…RAQK, and VNLY…LAQR. 2 disordered regions span residues 365–420 and 595–648; these read KVMR…KKSD and RGGG…EEAP. Over residues 366–420 the composition is skewed to basic and acidic residues; that stretch reads VMRDSTPAERTETPDSEKEKEVNKENEKKEDEEKAAEEKPKESDEEKKDETKKSD. Residues 610–633 are compositionally biased toward gly residues; that stretch reads GMRGPGYQGRGGPQGGPRPQGGRG. Residues 634–648 are compositionally biased toward low complexity; the sequence is QNAAAQPAAGREEAP. A PABC domain is found at 649–726; that stretch reads AGALTAQALN…ALSVYDEYMK (78 aa). The disordered stretch occupies residues 729 to 754; the sequence is GEGEAPADADKPKEAAKETATEENKS.

It belongs to the polyadenylate-binding protein type-1 family.

The protein resides in the cytoplasm. It is found in the nucleus. Binds the poly(A) tail of mRNA. Appears to be an important mediator of the multiple roles of the poly(A) tail in mRNA biogenesis, stability and translation. In the nucleus, involved in both mRNA cleavage and polyadenylation. Is also required for efficient mRNA export to the cytoplasm. Acts in concert with a poly(A)-specific nuclease (PAN) to affect poly(A) tail shortening, which may occur concomitantly with either nucleocytoplasmic mRNA transport or translational initiation. In the cytoplasm, stimulates translation initiation and regulates mRNA decay through translation termination-coupled poly(A) shortening, probably mediated by PAN. In Aspergillus clavatus (strain ATCC 1007 / CBS 513.65 / DSM 816 / NCTC 3887 / NRRL 1 / QM 1276 / 107), this protein is Polyadenylate-binding protein, cytoplasmic and nuclear (pab1).